A 281-amino-acid polypeptide reads, in one-letter code: Proteasome subunit beta (281 aa).

Positions methionine 1 to glycine 53 are cleaved as a propeptide — removed in mature form; by autocatalysis. Catalysis depends on threonine 54, which acts as the Nucleophile.

The protein belongs to the peptidase T1B family. In terms of assembly, the 20S proteasome core is composed of 14 alpha and 14 beta subunits that assemble into four stacked heptameric rings, resulting in a barrel-shaped structure. The two inner rings, each composed of seven catalytic beta subunits, are sandwiched by two outer rings, each composed of seven alpha subunits. The catalytic chamber with the active sites is on the inside of the barrel. Has a gated structure, the ends of the cylinder being occluded by the N-termini of the alpha-subunits. Is capped by the proteasome-associated ATPase, ARC.

It is found in the cytoplasm. The catalysed reaction is Cleavage of peptide bonds with very broad specificity.. The protein operates within protein degradation; proteasomal Pup-dependent pathway. With respect to regulation, the formation of the proteasomal ATPase ARC-20S proteasome complex, likely via the docking of the C-termini of ARC into the intersubunit pockets in the alpha-rings, may trigger opening of the gate for substrate entry. Interconversion between the open-gate and close-gate conformations leads to a dynamic regulation of the 20S proteasome proteolysis activity. Functionally, component of the proteasome core, a large protease complex with broad specificity involved in protein degradation. This Streptomyces griseus subsp. griseus (strain JCM 4626 / CBS 651.72 / NBRC 13350 / KCC S-0626 / ISP 5235) protein is Proteasome subunit beta.